Reading from the N-terminus, the 875-residue chain is Probable ubiquitin carboxyl-terminal hydrolase 7 (875 aa).

The UBP-type zinc-finger motif lies at 54–167 (KECSHLKKGV…RDVQQFICSN (114 aa)). Cys56, His58, Cys83, Cys86, Cys101, Cys104, Cys109, His116, His120, His127, Cys140, and Cys143 together coordinate Zn(2+). A USP domain is found at 208–875 (PGLKNLGATC…EAYMLFYERV (668 aa)). Cys217 (nucleophile) is an active-site residue. Residues Ser333 and Ser337 each carry the phosphoserine modification. The tract at residues 396-486 (YSKELSQSSD…ASPKKEVLKS (91 aa)) is disordered. Positions 401-438 (SQSSDSSQHQHDSFLPANSSPLAASSTKSLPSSELLDS) are enriched in low complexity. Over residues 473–484 (NHEEASPKKEVL) the composition is skewed to basic and acidic residues. A phosphoserine mark is found at Ser486 and Ser493. Residues 575–586 (RSRFSRSPKKSS) are compositionally biased toward basic residues. The tract at residues 575 to 628 (RSRFSRSPKKSSVKIVVDNANDDTDQAPTTNSSSLNENLLGGHASENDKSLKQS) is disordered. Over residues 600–611 (QAPTTNSSSLNE) the composition is skewed to polar residues. Residue Ser645 is modified to Phosphoserine. Catalysis depends on His812, which acts as the Proton acceptor.

The protein belongs to the peptidase C19 family.

It catalyses the reaction Thiol-dependent hydrolysis of ester, thioester, amide, peptide and isopeptide bonds formed by the C-terminal Gly of ubiquitin (a 76-residue protein attached to proteins as an intracellular targeting signal).. This Schizosaccharomyces pombe (strain 972 / ATCC 24843) (Fission yeast) protein is Probable ubiquitin carboxyl-terminal hydrolase 7 (ubp7).